A 719-amino-acid polypeptide reads, in one-letter code: Glutamate--tRNA ligase, cytoplasmic (719 aa).

An ATP-binding site is contributed by Ser93. Residues 176 to 205 (SGKPVAAPKSKDSQQAVKGDGQDKGKPEVD) form a disordered region. Basic and acidic residues predominate over residues 195–204 (DGQDKGKPEV). 217–219 (RFA) lines the L-glutamate pocket. Residues 220 to 230 (PEPSGYLHIGH) carry the 'HIGH' region motif. Residue His227 coordinates ATP. Residues 393–397 (YDFAC) and Arg411 contribute to the L-glutamate site. Residues Glu414 and 448–452 (LLSKR) each bind ATP. The 'KMSKS' region signature appears at 448–452 (LLSKR).

It belongs to the class-I aminoacyl-tRNA synthetase family. Glutamate--tRNA ligase type 2 subfamily. Interacts with GLN2, COL4 and RPP13L4/ZAR1.

Its subcellular location is the cytoplasm. The protein resides in the cytosol. The catalysed reaction is tRNA(Glu) + L-glutamate + ATP = L-glutamyl-tRNA(Glu) + AMP + diphosphate. Catalyzes the attachment of glutamate to tRNA(Glu) in a two-step reaction: glutamate is first activated by ATP to form Glu-AMP and then transferred to the acceptor end of tRNA(Glu). In Arabidopsis thaliana (Mouse-ear cress), this protein is Glutamate--tRNA ligase, cytoplasmic.